Here is a 634-residue protein sequence, read N- to C-terminus: Threonine--tRNA ligase (634 aa).

Positions 1 to 61 (MINITLPDGS…DHDASLRIIT (61 aa)) constitute a TGS domain. Positions 243–534 (DHRRIGKAQD…LIEHHAGAFP (292 aa)) are catalytic. Zn(2+)-binding residues include Cys334, His385, and His511.

This sequence belongs to the class-II aminoacyl-tRNA synthetase family. As to quaternary structure, homodimer. Requires Zn(2+) as cofactor.

Its subcellular location is the cytoplasm. It catalyses the reaction tRNA(Thr) + L-threonine + ATP = L-threonyl-tRNA(Thr) + AMP + diphosphate + H(+). In terms of biological role, catalyzes the attachment of threonine to tRNA(Thr) in a two-step reaction: L-threonine is first activated by ATP to form Thr-AMP and then transferred to the acceptor end of tRNA(Thr). Also edits incorrectly charged L-seryl-tRNA(Thr). The protein is Threonine--tRNA ligase of Xanthomonas euvesicatoria pv. vesicatoria (strain 85-10) (Xanthomonas campestris pv. vesicatoria).